The primary structure comprises 73 residues: Large ribosomal subunit protein bL31 (73 aa).

This sequence belongs to the bacterial ribosomal protein bL31 family. Type A subfamily. As to quaternary structure, part of the 50S ribosomal subunit.

In terms of biological role, binds the 23S rRNA. This is Large ribosomal subunit protein bL31 from Rhizobium johnstonii (strain DSM 114642 / LMG 32736 / 3841) (Rhizobium leguminosarum bv. viciae).